The sequence spans 585 residues: Cytochrome c lysine N-methyltransferase 1 (585 aa).

Residues 18 to 273 enclose the SET domain; that stretch reads KSLSLKPSTI…KPIEVFISYS (256 aa). The interval 186 to 288 is SET-like; it reads LNLSDIKHLY…FSMLVTYGFT (103 aa).

Belongs to the class V-like SAM-binding methyltransferase superfamily.

Its subcellular location is the cytoplasm. The protein resides in the cytosol. The enzyme catalyses L-lysyl-[cytochrome c] + S-adenosyl-L-methionine = N(6)-methyl-L-lysyl-[cytochrome c] + S-adenosyl-L-homocysteine + H(+). Methyltransferase which mediates trimethylation of 'Lys-78' of cytochrome c (CYC1). The chain is Cytochrome c lysine N-methyltransferase 1 (CTM1) from Saccharomyces cerevisiae (strain ATCC 204508 / S288c) (Baker's yeast).